A 462-amino-acid chain; its full sequence is ATP synthase subunit beta (462 aa).

151–158 is an ATP binding site; that stretch reads GGAGVGKT.

Belongs to the ATPase alpha/beta chains family. F-type ATPases have 2 components, CF(1) - the catalytic core - and CF(0) - the membrane proton channel. CF(1) has five subunits: alpha(3), beta(3), gamma(1), delta(1), epsilon(1). CF(0) has four main subunits: a(1), b(1), b'(1) and c(9-12).

It localises to the cell inner membrane. The enzyme catalyses ATP + H2O + 4 H(+)(in) = ADP + phosphate + 5 H(+)(out). In terms of biological role, produces ATP from ADP in the presence of a proton gradient across the membrane. The catalytic sites are hosted primarily by the beta subunits. This chain is ATP synthase subunit beta, found in Chlorobium chlorochromatii (strain CaD3).